The primary structure comprises 201 residues: Recombination protein RecR (201 aa).

The C4-type zinc finger occupies 59–74; it reads CEICGNMDTENICRIC. Residues 82–177 form the Toprim domain; sequence SIIAIVETVA…KISRLASGIP (96 aa).

This sequence belongs to the RecR family.

In terms of biological role, may play a role in DNA repair. It seems to be involved in an RecBC-independent recombinational process of DNA repair. It may act with RecF and RecO. This chain is Recombination protein RecR, found in Rickettsia rickettsii (strain Iowa).